The following is a 714-amino-acid chain: Calpain-1 catalytic subunit (714 aa).

Ser-2 is subject to N-acetylserine. The 300-residue stretch at 55 to 354 folds into the Calpain catalytic domain; sequence LFRDEAFPPV…FTRLEICNLT (300 aa). The Ca(2+) site is built by Gln-109 and Asp-114. Residues Cys-115, His-272, and Asn-296 contribute to the active site. Ca(2+)-binding residues include Asn-316, Asp-318, and Asp-323. Thr-354 carries the post-translational modification Phosphothreonine. The interval 355–526 is domain III; it reads PDALKSRTIR…KSAGTVELDD (172 aa). The tract at residues 527–542 is linker; the sequence is QIQANLPDEQVLSEEE. 4 consecutive EF-hand domains span residues 541 to 576, 585 to 618, 615 to 650, and 680 to 714; these read EEID…IISK, FSLE…NRIR, NRIR…AGFK, and VRLE…TMFA. The interval 543–713 is domain IV; the sequence is IDENFKALFR…LFKWLQLTMF (171 aa). Ca(2+) contacts are provided by Asp-598, Asp-600, Asn-602, Lys-604, Glu-609, Asp-628, Asp-630, Ser-632, Ser-634, and Glu-639.

The protein belongs to the peptidase C2 family. As to quaternary structure, forms a heterodimer with a small (regulatory) subunit CAPNS1. Requires Ca(2+) as cofactor. Undergoes calcium-induced successive autoproteolytic cleavages that generate a membrane-bound 78 kDa active form and an intracellular 75 kDa active form. Calpastatin reduces with high efficiency the transition from 78 kDa to 75 kDa calpain forms. In terms of tissue distribution, ubiquitous.

The protein resides in the cytoplasm. Its subcellular location is the cell membrane. It catalyses the reaction Broad endopeptidase specificity.. Its activity is regulated as follows. Activated by micromolar concentrations of calcium and inhibited by calpastatin. Functionally, calcium-regulated non-lysosomal thiol-protease which catalyzes limited proteolysis of substrates involved in cytoskeletal remodeling and signal transduction. Proteolytically cleaves CTBP1 at 'Asn-375', 'Gly-387' and 'His-409'. Cleaves and activates caspase-7 (CASP7). The chain is Calpain-1 catalytic subunit from Homo sapiens (Human).